A 426-amino-acid polypeptide reads, in one-letter code: Gamma-glutamyl phosphate reductase (426 aa).

It belongs to the gamma-glutamyl phosphate reductase family.

It is found in the cytoplasm. The catalysed reaction is L-glutamate 5-semialdehyde + phosphate + NADP(+) = L-glutamyl 5-phosphate + NADPH + H(+). It functions in the pathway amino-acid biosynthesis; L-proline biosynthesis; L-glutamate 5-semialdehyde from L-glutamate: step 2/2. Functionally, catalyzes the NADPH-dependent reduction of L-glutamate 5-phosphate into L-glutamate 5-semialdehyde and phosphate. The product spontaneously undergoes cyclization to form 1-pyrroline-5-carboxylate. This chain is Gamma-glutamyl phosphate reductase, found in Nitrobacter winogradskyi (strain ATCC 25391 / DSM 10237 / CIP 104748 / NCIMB 11846 / Nb-255).